Here is a 427-residue protein sequence, read N- to C-terminus: C4-dicarboxylate TRAP transporter large permease protein DctM (427 aa).

The next 13 helical transmembrane spans lie at 2 to 22, 55 to 75, 91 to 111, 115 to 135, 138 to 158, 171 to 191, 216 to 236, 237 to 257, 274 to 294, 310 to 330, 335 to 355, 359 to 379, and 396 to 416; these read TILF…PIAV, TLLA…GGVA, GGLA…SGSS, VAAV…PQAF, GIVC…VMVV, FIAG…VIYI, ALWG…GAFT, PTEA…FVYR, LTIM…VLTT, LSPW…GNFM, IILI…IDPI, IIMV…LNLF, and ALPW…IPAV.

Belongs to the TRAP transporter large permease family. In terms of assembly, the complex comprises the extracytoplasmic solute receptor protein DctP, and the two transmembrane proteins DctQ and DctM.

It is found in the cell inner membrane. Functionally, part of the tripartite ATP-independent periplasmic (TRAP) transport system DctPQM involved in C4-dicarboxylates uptake. This chain is C4-dicarboxylate TRAP transporter large permease protein DctM, found in Pseudomonas aeruginosa (strain ATCC 15692 / DSM 22644 / CIP 104116 / JCM 14847 / LMG 12228 / 1C / PRS 101 / PAO1).